A 373-amino-acid chain; its full sequence is UDP-N-acetylenolpyruvoylglucosamine reductase (373 aa).

The 174-residue stretch at leucine 30–aspartate 203 folds into the FAD-binding PCMH-type domain. The active site involves arginine 180. Residue serine 258 is the Proton donor of the active site. Glutamate 356 is an active-site residue.

Belongs to the MurB family. FAD serves as cofactor.

Its subcellular location is the cytoplasm. It carries out the reaction UDP-N-acetyl-alpha-D-muramate + NADP(+) = UDP-N-acetyl-3-O-(1-carboxyvinyl)-alpha-D-glucosamine + NADPH + H(+). It participates in cell wall biogenesis; peptidoglycan biosynthesis. Functionally, cell wall formation. The protein is UDP-N-acetylenolpyruvoylglucosamine reductase of Psychrobacter cryohalolentis (strain ATCC BAA-1226 / DSM 17306 / VKM B-2378 / K5).